A 341-amino-acid polypeptide reads, in one-letter code: Ferredoxin--NADP reductase 2 (341 aa).

Positions 42, 50, 55, 95, 129, 294, and 335 each coordinate FAD.

Belongs to the ferredoxin--NADP reductase type 2 family. In terms of assembly, homodimer. It depends on FAD as a cofactor.

It carries out the reaction 2 reduced [2Fe-2S]-[ferredoxin] + NADP(+) + H(+) = 2 oxidized [2Fe-2S]-[ferredoxin] + NADPH. This Chloroherpeton thalassium (strain ATCC 35110 / GB-78) protein is Ferredoxin--NADP reductase 2.